Consider the following 165-residue polypeptide: Lipoprotein signal peptidase (165 aa).

3 helical membrane passes run 9–29 (PFLW…LAVV), 65–85 (WQKY…LFFL), and 97–119 (TGYA…HGFV). Residues D121 and D139 contribute to the active site. The chain crosses the membrane as a helical span at residues 134-154 (VFNVADIAICIGAGLLAIDAF).

The protein belongs to the peptidase A8 family.

It is found in the cell inner membrane. It carries out the reaction Release of signal peptides from bacterial membrane prolipoproteins. Hydrolyzes -Xaa-Yaa-Zaa-|-(S,diacylglyceryl)Cys-, in which Xaa is hydrophobic (preferably Leu), and Yaa (Ala or Ser) and Zaa (Gly or Ala) have small, neutral side chains.. It participates in protein modification; lipoprotein biosynthesis (signal peptide cleavage). Functionally, this protein specifically catalyzes the removal of signal peptides from prolipoproteins. The polypeptide is Lipoprotein signal peptidase (Histophilus somni (strain 2336) (Haemophilus somnus)).